Consider the following 314-residue polypeptide: MVKKNFIPSVSLVRRDLPTLVTTTTSSTALSKPTSSVVSETSSKSLPSLTSSAFSTSSGATSSSSLIVASITPPSTAGNPFILNAADKPNGTVYIAVGAVIGAIFISILIWWLVSXYLSRRFTMTNSYANDSKNLYRGHHKHSSSLQSNPFDINDEKSYMQDDWDSMSQLESSQYEDAASPFNPIQDPFTDNRRSLFISPTLQVSQYEKSHSRHQSKDTNIFIDDPSLYVGTYLEEEEEEERKLNLNRPQRAASPERKEKKINSMEGYHKRNQSSLGLIPVASATSNTSSPKKAHKRQAPSMFLDDVLNGREII.

The interval 32–60 (KPTSSVVSETSSKSLPSLTSSAFSTSSGA) is disordered. Residues 93-113 (VYIAVGAVIGAIFISILIWWL) traverse the membrane as a helical segment. A phosphoserine mark is found at Ser148, Ser254, and Ser274. The disordered stretch occupies residues 240 to 309 (EERKLNLNRP…PSMFLDDVLN (70 aa)). The segment covering 254–269 (SPERKEKKINSMEGYH) has biased composition (basic and acidic residues).

The protein belongs to the PRM5 family.

It is found in the vacuole membrane. In Saccharomyces cerevisiae (strain FostersB) (Baker's yeast), this protein is Vacuolar membrane protein FOSTERSB_4073.